The sequence spans 122 residues: Large ribosomal subunit protein uL14 (122 aa).

The protein belongs to the universal ribosomal protein uL14 family. As to quaternary structure, part of the 50S ribosomal subunit. Forms a cluster with proteins L3 and L19. In the 70S ribosome, L14 and L19 interact and together make contacts with the 16S rRNA in bridges B5 and B8.

Functionally, binds to 23S rRNA. Forms part of two intersubunit bridges in the 70S ribosome. This Treponema denticola (strain ATCC 35405 / DSM 14222 / CIP 103919 / JCM 8153 / KCTC 15104) protein is Large ribosomal subunit protein uL14.